A 352-amino-acid polypeptide reads, in one-letter code: tRNA N6-adenosine threonylcarbamoyltransferase (352 aa).

Residues His-115 and His-119 each contribute to the Fe cation site. Substrate is bound by residues 138–142, Asp-171, Gly-184, and Asn-276; that span reads LVSGG. Asp-304 serves as a coordination point for Fe cation.

Belongs to the KAE1 / TsaD family. Requires Fe(2+) as cofactor.

The protein localises to the cytoplasm. The catalysed reaction is L-threonylcarbamoyladenylate + adenosine(37) in tRNA = N(6)-L-threonylcarbamoyladenosine(37) in tRNA + AMP + H(+). Functionally, required for the formation of a threonylcarbamoyl group on adenosine at position 37 (t(6)A37) in tRNAs that read codons beginning with adenine. Is involved in the transfer of the threonylcarbamoyl moiety of threonylcarbamoyl-AMP (TC-AMP) to the N6 group of A37, together with TsaE and TsaB. TsaD likely plays a direct catalytic role in this reaction. This Xanthomonas axonopodis pv. citri (strain 306) protein is tRNA N6-adenosine threonylcarbamoyltransferase.